Consider the following 505-residue polypeptide: MAKARTKFVCSACGADHAQWFGRCPKCHEYGSLQEEIVNAVSSGTNHRSLGAQKSRSSKVKTGQPQAALTFSQIRQENQGRFLSGYGELDRVLGGGIVPGALILIGGDPGIGKSTLLLQVAFQLATRLPRILYVSAEESGQQIKLRATRLGITQTVEPSQAQDGINNLAHDGNLFVLPETNLDDILRELEALQPQVAIIDSIQNLYFPALSSAPGSVSQVRECTGLLMQLAKRDHISLFIVGHVTKEGAIAGPKVLEHLVDTVLYFQGDRFASHRLLRSVKNRFGATQEIGIFEMVQSGLQEVLNPSQLFLGSREEFMSGTAITVACEGTRPLVVELQALVSPTSYASPRRSTTGVDYNRLLQVLAVLEKRLGVPLSKLDAYLSVAGGLEVEEPAVDLAMAIALVASFRDRVVDPTMIILGEIGLGGQIRPVSQLEIRLKEAAKLGFKKAIVPKGQTGIESAGIKLIPVGKVFAAIAVALPANENTTDQGNGSEAKIEEDLGKKD.

The C4-type zinc finger occupies 10-27; the sequence is CSACGADHAQWFGRCPKC. 107–114 is a binding site for ATP; that stretch reads GDPGIGKS. The short motif at 281–285 is the RadA KNRFG motif element; sequence KNRFG. The interval 380–505 is lon-protease-like; that stretch reads DAYLSVAGGL…KIEEDLGKKD (126 aa). A disordered region spans residues 485–505; sequence NTTDQGNGSEAKIEEDLGKKD. Residues 495–505 are compositionally biased toward basic and acidic residues; that stretch reads AKIEEDLGKKD.

The protein belongs to the RecA family. RadA subfamily.

In terms of biological role, DNA-dependent ATPase involved in processing of recombination intermediates, plays a role in repairing DNA breaks. Stimulates the branch migration of RecA-mediated strand transfer reactions, allowing the 3' invading strand to extend heteroduplex DNA faster. Binds ssDNA in the presence of ADP but not other nucleotides, has ATPase activity that is stimulated by ssDNA and various branched DNA structures, but inhibited by SSB. Does not have RecA's homology-searching function. The polypeptide is DNA repair protein RadA (Synechocystis sp. (strain ATCC 27184 / PCC 6803 / Kazusa)).